Consider the following 408-residue polypeptide: Protein BTN1 (408 aa).

The signal sequence occupies residues 1 to 30 (MSDKSHQIYCYFWLFGLINNVLYVVILSAA). The next 7 membrane-spanning stretches (helical) occupy residues 42-62 (LVLL…PFFI), 80-100 (LGMF…ISFA), 128-148 (SGTG…TSIF), 150-170 (VPVK…LFYF), 238-258 (TVYL…LFPI), 323-343 (WFYV…EGFL), and 369-389 (GAVS…GLGL).

This sequence belongs to the battenin family.

It localises to the vacuole membrane. Plays a role in vacuolar arginine transport. Involved in pH homeostasis. May be involved in ion homeostasis together with IST2. Not necessary for mitochondrial function or ATP synthase degradation. The polypeptide is Protein BTN1 (YHC3) (Saccharomyces cerevisiae (strain ATCC 204508 / S288c) (Baker's yeast)).